The primary structure comprises 566 residues: OTU domain-containing protein 5 (566 aa).

2 disordered regions span residues 1–117 (MTIL…GDAL) and 146–175 (PGHSKRRRQAPGVGAVGGASPEREEVGAGY). Residues 11 to 30 (PPDADPANEPPPPGPLPPAP) are compositionally biased toward pro residues. Residues 32 to 47 (RGGGVGVGGGGTGVGG) are compositionally biased toward gly residues. Pro residues predominate over residues 63-75 (ASPPPQGPLPGPP). Serine 64 carries the post-translational modification Phosphoserine. The span at 84–97 (AVPPGAVAGPRPQQ) shows a compositional bias: low complexity. A compositionally biased stretch (gly residues) spans 105-115 (GPGGPGGGPGD). Residue serine 165 is modified to Phosphoserine. The residue at position 175 (tyrosine 175) is a Phosphotyrosine. Serine 177 carries the phosphoserine modification. The residue at position 195 (threonine 195) is a Phosphothreonine. The region spanning 213 to 336 (FIIKQMKEDG…NIHYNSVVNP (124 aa)) is the OTU domain. The cys-loop stretch occupies residues 218-224 (MKEDGAC). Residue aspartate 221 is part of the active site. Cysteine 224 serves as the catalytic Nucleophile. Positions 273-283 (KRKNNCHGNHI) are variable-loop. Serine 323 carries the phosphoserine modification. Residues 324 to 329 (YHRNIH) form a his-loop region. Residue histidine 329 is part of the active site. Residues serine 332 and serine 370 each carry the phosphoserine modification. The interval 413–497 (ARQVRGPSQP…PGTSSQFSAG (85 aa)) is disordered. 2 stretches are compositionally biased toward low complexity: residues 425–438 (ASATCSSATAAASS) and 445–457 (SRSPRQRSSASSP). The residue at position 447 (serine 447) is a Phosphoserine. At threonine 502 the chain carries Phosphothreonine. Residue serine 503 is modified to Phosphoserine.

It belongs to the peptidase C85 family. Interacts with TRAF3. Phosphorylation at Ser-177 is required for deubiquitinating activity. Phosphorylation at Ser-323, Ser-332 and Ser-503 by MTOR promotes its activity.

It localises to the nucleus. It catalyses the reaction Thiol-dependent hydrolysis of ester, thioester, amide, peptide and isopeptide bonds formed by the C-terminal Gly of ubiquitin (a 76-residue protein attached to proteins as an intracellular targeting signal).. With respect to regulation, inhibited by N-ethyl-maleimide (NEM). Functionally, deubiquitinating enzyme that functions as a negative regulator of the innate immune system. Has peptidase activity towards 'Lys-48'- and 'Lys-63'-linked polyubiquitin chains. Can also cleave 'Lys-11'-linked ubiquitin chains (in vitro). Acts via TRAF3 deubiquitination and subsequent suppression of type I interferon (IFN) production. Controls neuroectodermal differentiation through cleaving 'Lys-48'-linked ubiquitin chains to counteract degradation of select chromatin regulators such as ARID1A, HDAC2 and HCF1. Acts as a positive regulator of mTORC1 and mTORC2 signaling following phosphorylation by MTOR: acts by mediating deubiquitination of BTRC, leading to its stability. In Rattus norvegicus (Rat), this protein is OTU domain-containing protein 5.